A 404-amino-acid chain; its full sequence is 4-hydroxy-3-methylbut-2-enyl diphosphate reductase (404 aa).

Cys66 provides a ligand contact to [4Fe-4S] cluster. His96 lines the (2E)-4-hydroxy-3-methylbut-2-enyl diphosphate pocket. His96 contacts dimethylallyl diphosphate. His96 contributes to the isopentenyl diphosphate binding site. Cys157 provides a ligand contact to [4Fe-4S] cluster. Residue His185 coordinates (2E)-4-hydroxy-3-methylbut-2-enyl diphosphate. Residue His185 coordinates dimethylallyl diphosphate. His185 lines the isopentenyl diphosphate pocket. Catalysis depends on Glu187, which acts as the Proton donor. Thr250 provides a ligand contact to (2E)-4-hydroxy-3-methylbut-2-enyl diphosphate. A [4Fe-4S] cluster-binding site is contributed by Cys288. Ser317, Ser318, Asn319, and Ser380 together coordinate (2E)-4-hydroxy-3-methylbut-2-enyl diphosphate. Dimethylallyl diphosphate-binding residues include Ser317, Ser318, Asn319, and Ser380. Positions 317, 318, 319, and 380 each coordinate isopentenyl diphosphate.

The protein belongs to the IspH family. It depends on [4Fe-4S] cluster as a cofactor.

It carries out the reaction isopentenyl diphosphate + 2 oxidized [2Fe-2S]-[ferredoxin] + H2O = (2E)-4-hydroxy-3-methylbut-2-enyl diphosphate + 2 reduced [2Fe-2S]-[ferredoxin] + 2 H(+). It catalyses the reaction dimethylallyl diphosphate + 2 oxidized [2Fe-2S]-[ferredoxin] + H2O = (2E)-4-hydroxy-3-methylbut-2-enyl diphosphate + 2 reduced [2Fe-2S]-[ferredoxin] + 2 H(+). Its pathway is isoprenoid biosynthesis; dimethylallyl diphosphate biosynthesis; dimethylallyl diphosphate from (2E)-4-hydroxy-3-methylbutenyl diphosphate: step 1/1. The protein operates within isoprenoid biosynthesis; isopentenyl diphosphate biosynthesis via DXP pathway; isopentenyl diphosphate from 1-deoxy-D-xylulose 5-phosphate: step 6/6. In terms of biological role, catalyzes the conversion of 1-hydroxy-2-methyl-2-(E)-butenyl 4-diphosphate (HMBPP) into a mixture of isopentenyl diphosphate (IPP) and dimethylallyl diphosphate (DMAPP). Acts in the terminal step of the DOXP/MEP pathway for isoprenoid precursor biosynthesis. This is 4-hydroxy-3-methylbut-2-enyl diphosphate reductase from Prochlorococcus marinus (strain MIT 9211).